Reading from the N-terminus, the 358-residue chain is Variant-surface-glycoprotein phospholipase C (358 aa).

The region spanning 25–198 (IGQVYMVGAH…STRRIFLVVR (174 aa)) is the PI-PLC X-box domain.

Monomer. The N-terminus is blocked.

Its subcellular location is the membrane. The enzyme catalyses a 6-(alpha-D-glucosaminyl)-1-(1,2-diacyl-sn-glycero-3-phospho)-1D-myo-inositol = 6-(alpha-D-glucosaminyl)-1D-myo-inositol 1,2-cyclic phosphate + a 1,2-diacyl-sn-glycerol. In terms of biological role, by hydrolysis of the attached glycolipid, releases soluble variant surface glycoprotein containing phosphoinositol from the cell wall of T.brucei after cell lysis. It also cleaves similar membrane anchors on some mammalian proteins. VSG lipase may play a role in processes such as parasite differentiation or antigenic variation. The sequence is that of Variant-surface-glycoprotein phospholipase C from Trypanosoma brucei brucei.